Here is a 502-residue protein sequence, read N- to C-terminus: CBL-interacting serine/threonine-protein kinase 13 (502 aa).

Residues 32-51 (TNKETSTPESPRSPRTPQGS) are disordered. Residues 35 to 48 (ETSTPESPRSPRTP) are compositionally biased toward low complexity. The 255-residue stretch at 57-311 (YEIGKLLGHG…IPEIMKHRWF (255 aa)) folds into the Protein kinase domain. ATP-binding positions include 63–71 (LGHGSFAKV) and lysine 86. Catalysis depends on aspartate 179, which acts as the Proton acceptor. The tract at residues 197–226 (DFGLSVVSEQLKQEGICQTFCGTPAYLAPE) is activation loop. Position 201 is a phosphoserine (serine 201). Phosphothreonine is present on threonine 215. The segment at 331–359 (DDDNDDDDSSSLSSGRSSTASEGDAEFDI) is disordered. Residues 340–352 (SSLSSGRSSTASE) are compositionally biased toward low complexity. The region spanning 366 to 387 (PRPASLNAFDILSFSDLSGLFE) is the NAF domain. Positions 390-419 (GQGARFVSAAPMTKIISKLEEIAKEVKFMV) are PPI.

It belongs to the protein kinase superfamily. CAMK Ser/Thr protein kinase family. SNF1 subfamily. As to quaternary structure, interacts with CBL2 and CBL3. Requires Mn(2+) as cofactor.

It carries out the reaction L-seryl-[protein] + ATP = O-phospho-L-seryl-[protein] + ADP + H(+). It catalyses the reaction L-threonyl-[protein] + ATP = O-phospho-L-threonyl-[protein] + ADP + H(+). Its function is as follows. CIPK serine-threonine protein kinases interact with CBL proteins. Binding of a CBL protein to the regulatory NAF domain of CIPK protein lead to the activation of the kinase in a calcium-dependent manner. This Arabidopsis thaliana (Mouse-ear cress) protein is CBL-interacting serine/threonine-protein kinase 13 (CIPK13).